Here is a 626-residue protein sequence, read N- to C-terminus: Lysine--tRNA ligase, cytoplasmic (626 aa).

Residue methionine 1 is modified to N-acetylmethionine. Polar residues-rich tracts occupy residues 1 to 11 (MEGAADQTTKA) and 18 to 27 (DSSTTLNAAE). Positions 1–84 (MEGAADQTTK…QKAVAADDEE (84 aa)) are disordered. The stretch at 37-69 (RSKNALKKEQKMKQKEEEKRRKDEEKAEKAKQA) forms a coiled coil. Residues 42–67 (LKKEQKMKQKEEEKRRKDEEKAEKAK) are compositionally biased toward basic and acidic residues. Residues 69 to 78 (APKASSQKAV) are compositionally biased toward low complexity. The segment at residues 141-217 (SLAGRIMSKR…RGELSIFPRS (77 aa)) is a DNA-binding region (OB). Substrate contacts are provided by glycine 313 and glutamate 337. Residues 359–361 (RNE) and 367–368 (HN) each bind ATP. Substrate-binding residues include glutamate 375 and tyrosine 377. 2 residues coordinate Ca(2+): glutamate 521 and glutamate 528. 528-529 (EL) is an ATP binding site. Residues asparagine 531 and glutamate 535 each coordinate substrate. 584 to 587 (GIDR) lines the ATP pocket.

It belongs to the class-II aminoacyl-tRNA synthetase family. Ca(2+) serves as cofactor.

It localises to the cytoplasm. The protein resides in the cytosol. The catalysed reaction is tRNA(Lys) + L-lysine + ATP = L-lysyl-tRNA(Lys) + AMP + diphosphate. Its function is as follows. Catalyzes the specific attachment of an amino acid to its cognate tRNA in a 2 step reaction: the amino acid (AA) is first activated by ATP to form AA-AMP and then transferred to the acceptor end of the tRNA. Promotes aminoacylation of non-cognate tRNAs and translational recoding of lysine at nonsense codons. This is Lysine--tRNA ligase, cytoplasmic from Arabidopsis thaliana (Mouse-ear cress).